We begin with the raw amino-acid sequence, 489 residues long: Putative (R)-citramalate synthase CimA (489 aa).

The region spanning 3 to 255 is the Pyruvate carboxyltransferase domain; the sequence is VKILDTTLRD…KTKIKKERLY (253 aa).

This sequence belongs to the alpha-IPM synthase/homocitrate synthase family. In terms of assembly, homodimer.

It carries out the reaction pyruvate + acetyl-CoA + H2O = (3R)-citramalate + CoA + H(+). Its pathway is amino-acid biosynthesis; L-isoleucine biosynthesis; 2-oxobutanoate from pyruvate: step 1/3. Catalyzes the condensation of pyruvate and acetyl-coenzyme A to form (R)-citramalate. This Archaeoglobus fulgidus (strain ATCC 49558 / DSM 4304 / JCM 9628 / NBRC 100126 / VC-16) protein is Putative (R)-citramalate synthase CimA (cimA).